The chain runs to 134 residues: Large ribosomal subunit protein uL16c (134 aa).

Basic residues predominate over residues 1-17 (MLSPKRTRFRKQHRGRM). The segment at 1–21 (MLSPKRTRFRKQHRGRMKGIS) is disordered.

Belongs to the universal ribosomal protein uL16 family. Part of the 50S ribosomal subunit.

Its subcellular location is the plastid. The protein resides in the chloroplast. This is Large ribosomal subunit protein uL16c from Solanum bulbocastanum (Wild potato).